We begin with the raw amino-acid sequence, 418 residues long: Translation initiation factor 2 subunit gamma (418 aa).

Positions 7–206 (QPEVNIGVVG…GIQKYIPTPQ (200 aa)) constitute a tr-type G domain. Residues 16–23 (GHVDHGKT) form a G1 region. 4 residues coordinate Mg(2+): D19, T23, G44, and T46. A GTP-binding site is contributed by 19–24 (DHGKTT). Residues 44-48 (GMTIK) form a G2 region. Positions 59, 62, 74, and 77 each coordinate Zn(2+). Residues 93–96 (DAPG) are G3. Residues 149-152 (NKVD) and 184-186 (SAL) each bind GTP. The tract at residues 149–152 (NKVD) is G4. The segment at 184-186 (SAL) is G5.

The protein belongs to the TRAFAC class translation factor GTPase superfamily. Classic translation factor GTPase family. EIF2G subfamily. As to quaternary structure, heterotrimer composed of an alpha, a beta and a gamma chain. Mg(2+) is required as a cofactor.

It carries out the reaction GTP + H2O = GDP + phosphate + H(+). In terms of biological role, eIF-2 functions in the early steps of protein synthesis by forming a ternary complex with GTP and initiator tRNA. This Sulfurisphaera tokodaii (strain DSM 16993 / JCM 10545 / NBRC 100140 / 7) (Sulfolobus tokodaii) protein is Translation initiation factor 2 subunit gamma.